We begin with the raw amino-acid sequence, 410 residues long: Iron-sulfur cluster assembly SufBD family protein MTH_1150 (410 aa).

This sequence belongs to the iron-sulfur cluster assembly SufBD family.

The polypeptide is Iron-sulfur cluster assembly SufBD family protein MTH_1150 (Methanothermobacter thermautotrophicus (strain ATCC 29096 / DSM 1053 / JCM 10044 / NBRC 100330 / Delta H) (Methanobacterium thermoautotrophicum)).